We begin with the raw amino-acid sequence, 143 residues long: Putative phosphotransferase IIA component SgcA (143 aa).

The 143-residue stretch at 1–143 (MINDIKWVQA…DDALFALVSG (143 aa)) folds into the PTS EIIA type-2 domain. The Tele-phosphohistidine intermediate role is filled by His63.

The protein resides in the cytoplasm. Functionally, the phosphoenolpyruvate-dependent sugar phosphotransferase system (sugar PTS), a major carbohydrate active -transport system, catalyzes the phosphorylation of incoming sugar substrates concomitantly with their translocation across the cell membrane. The sequence is that of Putative phosphotransferase IIA component SgcA (sgcA) from Escherichia coli (strain K12).